We begin with the raw amino-acid sequence, 315 residues long: Rab effector Noc2 (315 aa).

A RabBD domain is found at 41–158; it reads QRRKQHLSPA…KRSGAWFYKG (118 aa). An FYVE-type zinc finger spans residues 89 to 146; sequence GNGLSQCLLCGEVLGFLGSSSVFCKDCRKKVCTKCGIEASPGQKRPLWLCKICSEQRE. Zn(2+)-binding residues include Cys-95, Cys-98, Cys-112, Cys-115, Cys-120, Cys-123, Cys-138, and Cys-141. A disordered region spans residues 170-315; it reads GRADDPHFRP…APAGPSSCLG (146 aa). Basic and acidic residues-rich tracts occupy residues 184 to 193 and 221 to 240; these read PAEREPRSSE and LEDR…KPWK. The span at 262–275 shows a compositional bias: polar residues; the sequence is GCQSSLASGETGTG. Low complexity predominate over residues 298-315; sequence GRAPAADAAPAGPSSCLG.

In terms of assembly, recruited to dense-core vesicles through specific interaction with RAB27A in endocrine cells. Interacts with RAB3A, RAB3B, RAB3C and RAB3D. Interacts with ZYX. In terms of tissue distribution, moderate to high levels of expression in thyroid, ovary, stomach, heart, pancreas, skeletal muscle, kidney and liver. Also detected in epithelial cells.

The protein localises to the cytoplasm. It is found in the cytoplasmic vesicle. Its subcellular location is the secretory vesicle membrane. Functionally, rab GTPase effector involved in the late steps of regulated exocytosis, both in endocrine and exocrine cells. Acts as a potential RAB3B effector protein in epithelial cells. This is Rab effector Noc2 (RPH3AL) from Homo sapiens (Human).